The chain runs to 232 residues: GTP cyclohydrolase 1 (232 aa).

The disordered stretch occupies residues 1 to 24; it reads MSDNLKSYQDNHIENEDEEIYERS. C121, H124, and C192 together coordinate Zn(2+).

It belongs to the GTP cyclohydrolase I family. In terms of assembly, toroid-shaped homodecamer, composed of two pentamers of five dimers.

The enzyme catalyses GTP + H2O = 7,8-dihydroneopterin 3'-triphosphate + formate + H(+). Its pathway is cofactor biosynthesis; 7,8-dihydroneopterin triphosphate biosynthesis; 7,8-dihydroneopterin triphosphate from GTP: step 1/1. First enzyme in the biosynthesis of tetrahydrobiopterin (BH4). Catalyzes the conversion of GTP into dihydroneopterin triphosphate (7,8-dihydroneopterin 3'-triphosphate), which is subsequently catalyzed by 6-pyruvoyltetrahydropterin synthase (ptsA) and sepiapterin reductase (sprA). This chain is GTP cyclohydrolase 1 (gchA), found in Dictyostelium discoideum (Social amoeba).